The chain runs to 755 residues: Biodegradative arginine decarboxylase (755 aa).

K386 carries the post-translational modification N6-(pyridoxal phosphate)lysine.

This sequence belongs to the Orn/Lys/Arg decarboxylase class-I family. In terms of assembly, homodecamer. The basic unit is a homodimer, organized into a ring of giving a pentamer of five homodimers. Pyridoxal 5'-phosphate is required as a cofactor.

It localises to the cytoplasm. It carries out the reaction L-arginine + H(+) = agmatine + CO2. Homodimers are probably inactive, their assembly into a homodecamer at low pH requires neutralization of negatively charged residues. This uses cytoplasmic protons, contributing pH regulation and stabilizes the homodecamer. Component of the acid-resistance (AR) system allowing enteric pathogens to survive the acidic environment in the stomach. ADC can be found in two forms: biodegradative (this enzyme) and biosynthetic (speA). The biodegradative form plays a role in regulating pH by consuming proteins. Converts arginine imported by AdiC to agmatine which is then exported by AdiC. The sequence is that of Biodegradative arginine decarboxylase (adiA) from Escherichia coli (strain K12).